The primary structure comprises 519 residues: Pleckstrin homology domain-containing family A member 8 (519 aa).

The PH domain occupies methionine 1–alanine 93. The residue at position 139 (threonine 139) is a Phosphothreonine. Position 145 is a phosphoserine (serine 145). Phosphothreonine is present on threonine 153. The interval glycine 274–glutamate 302 is disordered. Positions aspartate 282–glutamate 298 are enriched in low complexity. Residues threonine 310–valine 519 form a glycolipid transfer protein homology domain region.

In terms of assembly, homodimer. Interacts with ARF1; the interaction together with phosphatidylinositol 4-phosphate binding is required for FAPP2 GlcCer transfer ability.

Its subcellular location is the golgi apparatus. It localises to the trans-Golgi network membrane. The protein resides in the membrane. Functionally, cargo transport protein that is required for apical transport from the trans-Golgi network (TGN). Transports AQP2 from the trans-Golgi network (TGN) to sites of AQP2 phosphorylation. Mediates the non-vesicular transport of glucosylceramide (GlcCer) from the trans-Golgi network (TGN) to the plasma membrane and plays a pivotal role in the synthesis of complex glycosphingolipids. Binding of both phosphatidylinositol 4-phosphate (PIP) and ARF1 are essential for the GlcCer transfer ability. Also required for primary cilium formation, possibly by being involved in the transport of raft lipids to the apical membrane, and for membrane tubulation. The chain is Pleckstrin homology domain-containing family A member 8 (PLEKHA8) from Canis lupus familiaris (Dog).